The following is a 290-amino-acid chain: Syntaxin-1A (290 aa).

The segment at 1–21 (MTKDRLAALQAAQSDDEDMPE) is disordered. At 1–267 (MTKDRLAALQ…KYQSKARRKK (267 aa)) the chain is on the cytoplasmic side. A t-SNARE coiled-coil homology domain is found at 194-256 (LADIEARHAD…QTATQDTKKA (63 aa)). Residues 268 to 289 (IWIAICVLIAIIILVVFLAIYL) form a helical; Anchor for type IV membrane protein membrane-spanning segment. Position 290 (T290) is a topological domain, vesicular.

Belongs to the syntaxin family. In terms of processing, (Microbial infection) Targeted and hydrolyzed by the light chain (LC) of P.bifermentans PMP1. Cleavage probably inhibits neurotransmitter release.

It localises to the cytoplasmic vesicle. The protein localises to the secretory vesicle. The protein resides in the synaptic vesicle membrane. Functionally, plays a critical role in several secretory processes. The chain is Syntaxin-1A from Anopheles gambiae (African malaria mosquito).